The primary structure comprises 162 residues: NADH-quinone oxidoreductase subunit I (162 aa).

4Fe-4S ferredoxin-type domains lie at 52 to 82 and 93 to 122; these read LRRYPNGEERCIACKLCEAICPAQAITIEAG and TRYDIDMVKCIYCGFCQEACPVDAIVEGPN. Cys62, Cys65, Cys68, Cys72, Cys102, Cys105, Cys108, and Cys112 together coordinate [4Fe-4S] cluster.

This sequence belongs to the complex I 23 kDa subunit family. NDH-1 is composed of 14 different subunits. Subunits NuoA, H, J, K, L, M, N constitute the membrane sector of the complex. It depends on [4Fe-4S] cluster as a cofactor.

The protein localises to the cell inner membrane. The catalysed reaction is a quinone + NADH + 5 H(+)(in) = a quinol + NAD(+) + 4 H(+)(out). In terms of biological role, NDH-1 shuttles electrons from NADH, via FMN and iron-sulfur (Fe-S) centers, to quinones in the respiratory chain. The immediate electron acceptor for the enzyme in this species is believed to be ubiquinone. Couples the redox reaction to proton translocation (for every two electrons transferred, four hydrogen ions are translocated across the cytoplasmic membrane), and thus conserves the redox energy in a proton gradient. This Azorhizobium caulinodans (strain ATCC 43989 / DSM 5975 / JCM 20966 / LMG 6465 / NBRC 14845 / NCIMB 13405 / ORS 571) protein is NADH-quinone oxidoreductase subunit I.